A 344-amino-acid polypeptide reads, in one-letter code: NDP-polyphosphate phosphotransferase 2 (344 aa).

The segment at 1 to 60 is disordered; the sequence is METAKPIAPQKDSKANGVDATDPVVKVASPQDPAGDAKVEDATAPVAEVEPRTPRNRRLP.

Belongs to the polyphosphate kinase 2 (PPK2) family. Class I subfamily. Mg(2+) is required as a cofactor.

The enzyme catalyses [phosphate](n) + ATP = [phosphate](n+1) + ADP. It catalyses the reaction [phosphate](n) + CTP = [phosphate](n+1) + CDP. It carries out the reaction [phosphate](n) + GTP = [phosphate](n+1) + GDP. The catalysed reaction is [phosphate](n) + UTP = [phosphate](n+1) + UDP. Its function is as follows. Uses inorganic polyphosphate (polyP) as a donor to convert NDP to NTP. PolyP hydrolysis is slightly faster with ADP, but it can also use GDP, CDP and UDP. The sequence is that of NDP-polyphosphate phosphotransferase 2 from Ruegeria pomeroyi (strain ATCC 700808 / DSM 15171 / DSS-3) (Silicibacter pomeroyi).